A 348-amino-acid chain; its full sequence is Holliday junction branch migration complex subunit RuvB (348 aa).

The segment at 1-183 is large ATPase domain (RuvB-L); the sequence is MTDPSRLVTP…FGIPVRLNFY (183 aa). ATP-binding positions include Leu-22, Arg-23, Gly-64, Lys-67, Thr-68, Thr-69, 130-132, Arg-173, Tyr-183, and Arg-220; that span reads EDF. Thr-68 contributes to the Mg(2+) binding site. Residues 184–254 are small ATPAse domain (RuvB-S); that stretch reads TIEELESIVS…IADHALGALE (71 aa). Positions 257 to 348 are head domain (RuvB-H); the sequence is AAGLDAMDRR…FGLFGGEEEA (92 aa). Residues Arg-293, Arg-312, and Arg-317 each contribute to the DNA site.

It belongs to the RuvB family. As to quaternary structure, homohexamer. Forms an RuvA(8)-RuvB(12)-Holliday junction (HJ) complex. HJ DNA is sandwiched between 2 RuvA tetramers; dsDNA enters through RuvA and exits via RuvB. An RuvB hexamer assembles on each DNA strand where it exits the tetramer. Each RuvB hexamer is contacted by two RuvA subunits (via domain III) on 2 adjacent RuvB subunits; this complex drives branch migration. In the full resolvosome a probable DNA-RuvA(4)-RuvB(12)-RuvC(2) complex forms which resolves the HJ.

It is found in the cytoplasm. It catalyses the reaction ATP + H2O = ADP + phosphate + H(+). The RuvA-RuvB-RuvC complex processes Holliday junction (HJ) DNA during genetic recombination and DNA repair, while the RuvA-RuvB complex plays an important role in the rescue of blocked DNA replication forks via replication fork reversal (RFR). RuvA specifically binds to HJ cruciform DNA, conferring on it an open structure. The RuvB hexamer acts as an ATP-dependent pump, pulling dsDNA into and through the RuvAB complex. RuvB forms 2 homohexamers on either side of HJ DNA bound by 1 or 2 RuvA tetramers; 4 subunits per hexamer contact DNA at a time. Coordinated motions by a converter formed by DNA-disengaged RuvB subunits stimulates ATP hydrolysis and nucleotide exchange. Immobilization of the converter enables RuvB to convert the ATP-contained energy into a lever motion, pulling 2 nucleotides of DNA out of the RuvA tetramer per ATP hydrolyzed, thus driving DNA branch migration. The RuvB motors rotate together with the DNA substrate, which together with the progressing nucleotide cycle form the mechanistic basis for DNA recombination by continuous HJ branch migration. Branch migration allows RuvC to scan DNA until it finds its consensus sequence, where it cleaves and resolves cruciform DNA. This chain is Holliday junction branch migration complex subunit RuvB, found in Rhodopseudomonas palustris (strain HaA2).